The chain runs to 227 residues: Cytochrome c oxidase subunit 2 (227 aa).

The Mitochondrial intermembrane segment spans residues 1–14 (MAYPFQLGLQDATS). A helical transmembrane segment spans residues 15-45 (PIMEELTNFHDHTLMIVFLISSLVLYLISLM). Residues 46 to 59 (LTTKLIHTNTMDAQ) lie on the Mitochondrial matrix side of the membrane. The helical transmembrane segment at 60–87 (EVETVWTILPAIILIMIALPSLRILYLM) threads the bilayer. Residues 88–227 (DEINNPVLTV…LFENWSTSMI (140 aa)) lie on the Mitochondrial intermembrane side of the membrane. Positions 161, 196, 198, 200, 204, and 207 each coordinate Cu cation. Residue E198 coordinates Mg(2+).

The protein belongs to the cytochrome c oxidase subunit 2 family. In terms of assembly, component of the cytochrome c oxidase (complex IV, CIV), a multisubunit enzyme composed of 14 subunits. The complex is composed of a catalytic core of 3 subunits MT-CO1, MT-CO2 and MT-CO3, encoded in the mitochondrial DNA, and 11 supernumerary subunits COX4I, COX5A, COX5B, COX6A, COX6B, COX6C, COX7A, COX7B, COX7C, COX8 and NDUFA4, which are encoded in the nuclear genome. The complex exists as a monomer or a dimer and forms supercomplexes (SCs) in the inner mitochondrial membrane with NADH-ubiquinone oxidoreductase (complex I, CI) and ubiquinol-cytochrome c oxidoreductase (cytochrome b-c1 complex, complex III, CIII), resulting in different assemblies (supercomplex SCI(1)III(2)IV(1) and megacomplex MCI(2)III(2)IV(2)). Found in a complex with TMEM177, COA6, COX18, COX20, SCO1 and SCO2. Interacts with TMEM177 in a COX20-dependent manner. Interacts with COX20. Interacts with COX16. Cu cation is required as a cofactor.

Its subcellular location is the mitochondrion inner membrane. It carries out the reaction 4 Fe(II)-[cytochrome c] + O2 + 8 H(+)(in) = 4 Fe(III)-[cytochrome c] + 2 H2O + 4 H(+)(out). Its function is as follows. Component of the cytochrome c oxidase, the last enzyme in the mitochondrial electron transport chain which drives oxidative phosphorylation. The respiratory chain contains 3 multisubunit complexes succinate dehydrogenase (complex II, CII), ubiquinol-cytochrome c oxidoreductase (cytochrome b-c1 complex, complex III, CIII) and cytochrome c oxidase (complex IV, CIV), that cooperate to transfer electrons derived from NADH and succinate to molecular oxygen, creating an electrochemical gradient over the inner membrane that drives transmembrane transport and the ATP synthase. Cytochrome c oxidase is the component of the respiratory chain that catalyzes the reduction of oxygen to water. Electrons originating from reduced cytochrome c in the intermembrane space (IMS) are transferred via the dinuclear copper A center (CU(A)) of subunit 2 and heme A of subunit 1 to the active site in subunit 1, a binuclear center (BNC) formed by heme A3 and copper B (CU(B)). The BNC reduces molecular oxygen to 2 water molecules using 4 electrons from cytochrome c in the IMS and 4 protons from the mitochondrial matrix. This chain is Cytochrome c oxidase subunit 2 (MT-CO2), found in Gerbillurus vallinus (Brush-tailed hairy-footed gerbil).